Reading from the N-terminus, the 421-residue chain is 26S proteasome non-ATPase regulatory subunit 11A (421 aa).

Residues 227–391 (AYSYFYEAFE…GVLIVFDEPP (165 aa)) form the PCI domain.

Belongs to the proteasome subunit S9 family. As to quaternary structure, component of the lid subcomplex of the 19S proteasome regulatory particle complex (also named PA700 complex). The 26S proteasome consists of a 20S proteasome core and two 19S regulatory subunits.

The protein localises to the nucleus. Its subcellular location is the cytoplasm. The protein resides in the cytosol. Functionally, component of the lid subcomplex of the 26S proteasome, a multiprotein complex involved in the ATP-dependent degradation of ubiquitinated proteins. In the complex, psmd11a is required for proteasome assembly. In Danio rerio (Zebrafish), this protein is 26S proteasome non-ATPase regulatory subunit 11A (psmd11a).